Here is a 420-residue protein sequence, read N- to C-terminus: MVEKRTQPLARDAMAYVLAGGRGSRLKELTDRRAKPAVYFGGKARIIDFALSNALNSGIRRIGVATQYKAHSLIRHLQRGWNFFRPERNESFDILPASQRVSETQWYEGTADAVYQNIDIIEDHGVEYMVILAGDHVYKMDYELMLQQHVDSGADVTVGCLEVPRMEATGFGVMHVDNADRIIAFVEKPADPPGIPGNPDMALASMGIYVFHTKFLMDMLRRDAADPKSSRDFGKDIIPYIVEHGKAVAHRFTHSCVRSDFEREAYWRDVGTIDAYWQANIDLTHITPELDIYDSTWPIWTFSEIKPPAKFVHDDENRRGSATSSLVSGDCIISGAALNRSLLFTGVRVNSYSRLENAVVLPDVTIGRHSILRNVVIDSRVVIPEGLVVGDDPELDAKRFRRTESGVCLITQTMIDKLGM.

Alpha-D-glucose 1-phosphate contacts are provided by residues Tyr107, Gly172, Glu187–Lys188, and Ser205.

Belongs to the bacterial/plant glucose-1-phosphate adenylyltransferase family. In terms of assembly, homotetramer.

It catalyses the reaction alpha-D-glucose 1-phosphate + ATP + H(+) = ADP-alpha-D-glucose + diphosphate. It participates in glycan biosynthesis; glycogen biosynthesis. Involved in the biosynthesis of ADP-glucose, a building block required for the elongation reactions to produce glycogen. Catalyzes the reaction between ATP and alpha-D-glucose 1-phosphate (G1P) to produce pyrophosphate and ADP-Glc. This chain is Glucose-1-phosphate adenylyltransferase, found in Rhizobium meliloti (strain 1021) (Ensifer meliloti).